The primary structure comprises 373 residues: 5-amino-6-(5-phospho-D-ribitylamino)uracil phosphatase, chloroplastic (373 aa).

This sequence belongs to the HAD-like hydrolase superfamily. DOG/GPP family. In terms of assembly, homodimer. Mg(2+) is required as a cofactor.

It localises to the plastid. The protein localises to the chloroplast. The enzyme catalyses 5-amino-6-(5-phospho-D-ribitylamino)uracil + H2O = 5-amino-6-(D-ribitylamino)uracil + phosphate. Functionally, catalyzes the dephosphorylation of 5-amino-6-(5-phospho-D-ribitylamino)uracil, also known as ARPP, but has no activity toward flavin mononucleotide (FMN). The polypeptide is 5-amino-6-(5-phospho-D-ribitylamino)uracil phosphatase, chloroplastic (Arabidopsis thaliana (Mouse-ear cress)).